The sequence spans 450 residues: Keratin, type I cytoskeletal 25 (450 aa).

Positions 1 to 23 (MSLRLSSASRRSCPRPTTGSLRL) are enriched in low complexity. The tract at residues 1–26 (MSLRLSSASRRSCPRPTTGSLRLSGG) is disordered. The interval 1–78 (MSLRLSSASR…VNERGLLSGN (78 aa)) is head. The segment at 79-114 (EKVTMQNLNDRLASYLDSVHALEEANADLEQKIKGW) is coil 1A. An IF rod domain is found at 79–394 (EKVTMQNLND…LLIGGDDGAC (316 aa)). Residues 115-136 (YEKFGPGSCRGLDHDYSRYFPI) are linker 1. Residues 137 to 228 (IDDLKNQIIA…KNHKEEMQVL (92 aa)) are coil 1B. The interval 229–251 (QCAAGGNVNVEMNAAPGVDLTVL) is linker 12. The segment at 252-390 (LNNMRAEYEA…ETYCLLIGGD (139 aa)) is coil 2. Residues 391 to 450 (DGACKSGGYKSKDYGSGNVGSQVKDSAKAIVVKKVLEEVDQRSKILTTRLRSLEEKSQSN) form a tail region. The residue at position 442 (Ser442) is a Phosphoserine.

The protein belongs to the intermediate filament family. In terms of assembly, heterodimer of a type I and a type II keratin. Heterodimer with type II keratin KRT5 leading to the formation of keratin intermediate filament (KIF) network. Interacts with KRT6A to form filaments.

The protein resides in the cytoplasm. Essential for the proper assembly of type I and type II keratin protein complexes and formation of keratin intermediate filaments in the inner root sheath (irs). Plays a role in the cytoskeleton organization. The sequence is that of Keratin, type I cytoskeletal 25 (KRT25) from Pan troglodytes (Chimpanzee).